Consider the following 277-residue polypeptide: Hemin import ATP-binding protein HmuV (277 aa).

In terms of domain architecture, ABC transporter spans 19–259; it reads VEVADLNYSV…AIIEEAFGHR (241 aa). An ATP-binding site is contributed by 51–58; that stretch reads GRNGAGKS.

The protein belongs to the ABC transporter superfamily. Heme (hemin) importer (TC 3.A.1.14.5) family. In terms of assembly, the complex is composed of two ATP-binding proteins (HmuV), two transmembrane proteins (HmuU) and a solute-binding protein (HmuT).

It is found in the cell membrane. Functionally, part of the ABC transporter complex HmuTUV involved in hemin import. Responsible for energy coupling to the transport system. The protein is Hemin import ATP-binding protein HmuV of Deinococcus geothermalis (strain DSM 11300 / CIP 105573 / AG-3a).